The sequence spans 550 residues: MFCVQCEQTIRTPAGNGCSYAQGMCGKTAETSDLQDLLIAALQGLSAWAVKAREYGIINHDVDSFAPRAFFSTLTNVNFDSPRIVGYAREAIALREALKAQCLAVDANARVDNPMADLQLVSDDLGELQRQAAEFTPNKDKAAIGENILGLRLLCLYGLKGAAAYMEHAHVLGQYDNDIYAQYHKIMAWLGTWPADMNALLECSMEIGQMNFKVMSILDAGETGKYGHPTPTQVNVKATAGKCILISGHDLKDLYNLLEQTEGTGVNVYTHGEMLPAHGYPELRKFKHLVGNYGSGWQNQQVEFARFPGPIVMTSNCIIDPTVGAYDDRIWTRSIVGWPGVRHLDGDDFSAVITQAQQMAGFPYSEIPHLITVGFGRQTLLGAADTLIDLVSREKLRHIFLLGGCDGARGERHYFTDFATSVPDDCLILTLACGKYRFNKLEFGDIEGLPRLVDAGQCNDAYSAIILAVTLAEKLGCGVNDLPLSLVLSWFEQKAIVILLTLLSLGVKNIVTGPTAPGFLTPDLLAVLNEKFGLRSITTVEEDMKQLLSA.

The [2Fe-2S] cluster site is built by C3, C6, C18, and C25. Positions 249, 273, 317, 405, 433, 458, 492, and 494 each coordinate hybrid [4Fe-2O-2S] cluster. C405 is subject to Cysteine persulfide.

This sequence belongs to the HCP family. [2Fe-2S] cluster is required as a cofactor. Hybrid [4Fe-2O-2S] cluster serves as cofactor.

The protein localises to the cytoplasm. The catalysed reaction is A + NH4(+) + H2O = hydroxylamine + AH2 + H(+). With respect to regulation, inhibited by oxygen. Activated by cyanide except in the prolonged presence of excess cyanide, where the enzyme is inactivated. Its function is as follows. Catalyzes the reduction of hydroxylamine to form NH(3) and H(2)O. Is also able to reduce hydroxylamine analogs such as methylhydroxylamine and hydroxyquinone. Might have a role as a scavenger of potentially toxic by-products of nitrate metabolism. The polypeptide is Hydroxylamine reductase (Escherichia coli (strain K12)).